The primary structure comprises 478 residues: Zinc metalloproteinase/disintegrin (478 aa).

The first 20 residues, 1–20, serve as a signal peptide directing secretion; sequence MIEVLLVTICLAAFPYQGSS. Positions 21–187 are excised as a propeptide; that stretch reads IILESGNVND…PIKKASQSNL (167 aa). Cystine bridges form between C304–C384, C344–C368, and C346–C351. H329 provides a ligand contact to Zn(2+). Residue E330 is part of the active site. Zn(2+) is bound by residues H333 and H339. Residues 390-405 constitute a propeptide that is removed on maturation; that stretch reads LRTDTVSTPVSGNELL. The Disintegrin domain maps to 397 to 478; that stretch reads TPVSGNELLE…AGCPRNPFHA (82 aa). 6 cysteine pairs are disulfide-bonded: C411-C426, C413-C421, C420-C443, C434-C440, C439-C464, and C452-C471. The Cell attachment site motif lies at 456–458; sequence RGD.

The protein belongs to the venom metalloproteinase (M12B) family. P-II subfamily. P-IIa sub-subfamily. In terms of assembly, monomer. As to expression, expressed by the venom gland.

It localises to the secreted. Functionally, binds alpha-5/beta-1 (ITGAV/ITGB1), alpha-V/beta-3 (ITGAV/ITGB3) and alpha-M/beta-2 (ITGAM/ITGB2) integrins. Is a potent inhibitor of platelet aggregation induced by ADP, collagen, and thrombin. Induces neutrophil chemotaxis and inhibits the chemotaxis of human neutrophils toward fMLP, IL-8, and jarastatin itself. Directly activates an integrin-coupled signaling and modulate the MAPK pathway in different ways, leading the neutrophils to express different functional response. Induces Erk-2 translocation to nucleus and a delay of the spontaneous apoptosis of neutrophils. Increases the IL-8 mRNA levels in neutrophils. When injected simultaneously with melanoma cells in mice, jarastatin, flavoridin (FL) and kistrin (KR) significantly reduce tumor lung colonization. Inhibits mouse melanoma B16F10 cell growth in vitro. When it interacts with melanoma cells, it induces actin cytoskeleton rearrangement, increasing actin polymerization and PTK2/FAK1 phosphorylation. Interferes with NF-kappaB translocation in melanoma cells. In Bothrops jararaca (Jararaca), this protein is Zinc metalloproteinase/disintegrin.